The primary structure comprises 120 residues: Cytochrome b5 (120 aa).

The Cytochrome b5 heme-binding domain maps to 2–78 (PKVYSYQEVA…LKGLYIGDVD (77 aa)). 2 residues coordinate heme: histidine 37 and histidine 61. Residues 98–118 (GSGTLVVILAILMLGVAYYLL) traverse the membrane as a helical segment.

It belongs to the cytochrome b5 family.

The protein resides in the endoplasmic reticulum membrane. The protein localises to the microsome membrane. Its function is as follows. Membrane bound hemoprotein which function as an electron carrier for several membrane bound oxygenases. It plays a role in fatty-acid desaturation and is also involved in several steps of the sterol biosynthesis pathway, particularly in the 4-demethylation of the 4,4'-dimethyl zymosterol. In Saccharomyces cerevisiae (strain ATCC 204508 / S288c) (Baker's yeast), this protein is Cytochrome b5 (CYB5).